The primary structure comprises 354 residues: UPF0283 membrane protein plu2581 (354 aa).

3 helical membrane passes run 71–91 (MVYG…VQWI), 101–121 (SALG…GSLV), and 214–234 (ESAL…FIAW).

This sequence belongs to the UPF0283 family.

It is found in the cell inner membrane. The polypeptide is UPF0283 membrane protein plu2581 (Photorhabdus laumondii subsp. laumondii (strain DSM 15139 / CIP 105565 / TT01) (Photorhabdus luminescens subsp. laumondii)).